We begin with the raw amino-acid sequence, 192 residues long: Protein SHORT HYPOCOTYL IN WHITE LIGHT 1 (192 aa).

Residues 43–50 (FRRLNRSL) carry the Nuclear localization signal motif. The segment at 70-92 (GGDNYDVVPDDDGFSDDDDEEDE) is disordered. A compositionally biased stretch (acidic residues) spans 77-92 (VPDDDGFSDDDDEEDE). 2 helical membrane-spanning segments follow: residues 122–142 (ILPA…ILLL) and 159–179 (GGTV…ASFF).

In terms of assembly, interacts with HY5 and COP1 in the nucleus. As to expression, expressed in young seedlings (e.g. hypocotyl and cotyledons) and in green tissues (e.g. leaves, stems, sepals, and young siliques).

It is found in the nucleus membrane. Negative regulator of photomorphogenesis modulating both light and abscisic acid (ABA) signaling pathways. Negatively regulates the light-mediated inhibition of hypocotyl elongation, probably in a PHYB-mediated signaling pathway, but promotes flowering time (especially in long days) and lateral root formation. Enhances light-regulated gene expression. Promotes COP1-mediated degradation of HY5 during seedling development (e.g. hypocotyl growth) through enhanced ubiquitination in the darkness. Also involved in root gravitropism. This chain is Protein SHORT HYPOCOTYL IN WHITE LIGHT 1, found in Arabidopsis thaliana (Mouse-ear cress).